We begin with the raw amino-acid sequence, 142 residues long: Large ribosomal subunit protein uL11 (142 aa).

This sequence belongs to the universal ribosomal protein uL11 family. Part of the ribosomal stalk of the 50S ribosomal subunit. Interacts with L10 and the large rRNA to form the base of the stalk. L10 forms an elongated spine to which L12 dimers bind in a sequential fashion forming a multimeric L10(L12)X complex. Post-translationally, one or more lysine residues are methylated.

Functionally, forms part of the ribosomal stalk which helps the ribosome interact with GTP-bound translation factors. This Parvibaculum lavamentivorans (strain DS-1 / DSM 13023 / NCIMB 13966) protein is Large ribosomal subunit protein uL11.